A 471-amino-acid chain; its full sequence is UDP-N-acetylmuramate--L-alanine ligase (471 aa).

112–118 (GTHGKTT) lines the ATP pocket.

Belongs to the MurCDEF family.

It is found in the cytoplasm. It carries out the reaction UDP-N-acetyl-alpha-D-muramate + L-alanine + ATP = UDP-N-acetyl-alpha-D-muramoyl-L-alanine + ADP + phosphate + H(+). The protein operates within cell wall biogenesis; peptidoglycan biosynthesis. In terms of biological role, cell wall formation. The chain is UDP-N-acetylmuramate--L-alanine ligase from Aromatoleum aromaticum (strain DSM 19018 / LMG 30748 / EbN1) (Azoarcus sp. (strain EbN1)).